A 164-amino-acid polypeptide reads, in one-letter code: Transcriptional regulator MraZ (164 aa).

2 consecutive SpoVT-AbrB domains span residues 7–60 and 83–126; these read HFTN…EIDE and SEIL…EPGR. Residues 141–164 are disordered; it reads LRKQLSSRPVAPDAQPPRPHGARE. Residues 154-164 are compositionally biased toward pro residues; sequence AQPPRPHGARE.

It belongs to the MraZ family. Forms oligomers.

It is found in the cytoplasm. The protein resides in the nucleoid. The sequence is that of Transcriptional regulator MraZ from Beijerinckia indica subsp. indica (strain ATCC 9039 / DSM 1715 / NCIMB 8712).